Consider the following 95-residue polypeptide: Cobalt transport protein CbiN (95 aa).

2 helical membrane passes run 7–27 (IMLIAVAVIAIAPLVIYSGLG) and 67–87 (LLFALQAAIGALIIGYVFGYY).

This sequence belongs to the CbiN family. As to quaternary structure, forms an energy-coupling factor (ECF) transporter complex composed of an ATP-binding protein (A component, CbiO), a transmembrane protein (T component, CbiQ) and 2 possible substrate-capture proteins (S components, CbiM and CbiN) of unknown stoichimetry.

The protein resides in the cell membrane. It functions in the pathway cofactor biosynthesis; adenosylcobalamin biosynthesis. Its function is as follows. Part of the energy-coupling factor (ECF) transporter complex CbiMNOQ involved in cobalt import. In Methanothermobacter marburgensis (strain ATCC BAA-927 / DSM 2133 / JCM 14651 / NBRC 100331 / OCM 82 / Marburg) (Methanobacterium thermoautotrophicum), this protein is Cobalt transport protein CbiN.